Reading from the N-terminus, the 931-residue chain is Aftiphilin (931 aa).

The disordered stretch occupies residues 1-49 (MEPDIIRMYSSSPPPLDNGAEDDEEDEFGEFGGFSEVSPSGVGFVDFDT). Residues 19 to 29 (GAEDDEEDEFG) show a composition bias toward acidic residues. Positions 28 to 31 (FGEF) match the WXXF motif 1 motif. A compositionally biased stretch (low complexity) spans 33 to 45 (GFSEVSPSGVGFV). A Phosphoserine modification is found at Ser151. Polar residues predominate over residues 371 to 381 (SVKTSDVNEIG). The disordered stretch occupies residues 371 to 454 (SVKTSDVNEI…PFVTSTQDSM (84 aa)). The residue at position 395 (Ser395) is a Phosphoserine. A WXXF motif 2 motif is present at residues 433-436 (FGDF). Positions 439-454 (ANGTTPPFVTSTQDSM) are enriched in polar residues. Positions 476-479 (FGEF) match the WXXF motif 3 motif. Disordered stretches follow at residues 494–561 (TESD…SSAG) and 599–636 (WQSQ…LQEP). Positions 516-530 (GGKDSKPDSKLKNGQ) are enriched in basic and acidic residues. Thr613 carries the post-translational modification Phosphothreonine. Residues 618 to 631 (SVSSAASKGAVASG) are compositionally biased toward low complexity. A CLTCL1/Clathrin-binding motif is present at residues 712 to 714 (YQW). Positions 821–825 (LLNLD) are clathrin-binding.

As to quaternary structure, self-associates. Interacts with GGA1 (via GAE domain). Interacts with GGA3 (via GAE domain), AP1G1 (via GAE domain) and AP1G2 (via GAE domain). Component of the aftiphilin/p200/gamma-synergin complex, at least composed of AFTPH/aftiphilin, HEATR5B/p200a and SYNRG/gamma-synergin, which plays a role in the AP1G1/AP-1-mediated protein trafficking from early to recycling endosomes. Within the complex interacts with HEATR5B/p200a and SYNRG/gamma-synergin; the interactions are direct. Interacts with AP1G1/AP-1; the interaction is required to recruit AFTPH/aftiphilin to the perinuclear region of the cell. Interacts with CLTCL1/Clathrin.

It localises to the cytoplasm. The protein localises to the perinuclear region. The protein resides in the cytoplasmic vesicle. Its subcellular location is the clathrin-coated vesicle. Functionally, component of clathrin-coated vesicles. Component of the aftiphilin/p200/gamma-synergin complex, which plays roles in AP1G1/AP-1-mediated protein trafficking including the trafficking of transferrin from early to recycling endosomes, and the membrane trafficking of furin and the lysosomal enzyme cathepsin D between the trans-Golgi network (TGN) and endosomes. This is Aftiphilin (Aftph) from Mus musculus (Mouse).